Here is a 273-residue protein sequence, read N- to C-terminus: 3-methyl-2-oxobutanoate hydroxymethyltransferase (273 aa).

Residues D53 and D92 each contribute to the Mg(2+) site. Residues 53–54 (DS), D92, and K122 each bind 3-methyl-2-oxobutanoate. E124 lines the Mg(2+) pocket. E191 serves as the catalytic Proton acceptor.

It belongs to the PanB family. Homodecamer; pentamer of dimers. Requires Mg(2+) as cofactor.

Its subcellular location is the cytoplasm. It catalyses the reaction 3-methyl-2-oxobutanoate + (6R)-5,10-methylene-5,6,7,8-tetrahydrofolate + H2O = 2-dehydropantoate + (6S)-5,6,7,8-tetrahydrofolate. It functions in the pathway cofactor biosynthesis; (R)-pantothenate biosynthesis; (R)-pantoate from 3-methyl-2-oxobutanoate: step 1/2. In terms of biological role, catalyzes the reversible reaction in which hydroxymethyl group from 5,10-methylenetetrahydrofolate is transferred onto alpha-ketoisovalerate to form ketopantoate. This Phocaeicola vulgatus (strain ATCC 8482 / DSM 1447 / JCM 5826 / CCUG 4940 / NBRC 14291 / NCTC 11154) (Bacteroides vulgatus) protein is 3-methyl-2-oxobutanoate hydroxymethyltransferase.